Reading from the N-terminus, the 348-residue chain is UDP-3-O-acylglucosamine N-acyltransferase (348 aa).

His241 functions as the Proton acceptor in the catalytic mechanism.

The protein belongs to the transferase hexapeptide repeat family. LpxD subfamily. In terms of assembly, homotrimer.

It carries out the reaction a UDP-3-O-[(3R)-3-hydroxyacyl]-alpha-D-glucosamine + a (3R)-hydroxyacyl-[ACP] = a UDP-2-N,3-O-bis[(3R)-3-hydroxyacyl]-alpha-D-glucosamine + holo-[ACP] + H(+). It participates in bacterial outer membrane biogenesis; LPS lipid A biosynthesis. In terms of biological role, catalyzes the N-acylation of UDP-3-O-acylglucosamine using 3-hydroxyacyl-ACP as the acyl donor. Is involved in the biosynthesis of lipid A, a phosphorylated glycolipid that anchors the lipopolysaccharide to the outer membrane of the cell. This is UDP-3-O-acylglucosamine N-acyltransferase from Neisseria meningitidis serogroup C / serotype 2a (strain ATCC 700532 / DSM 15464 / FAM18).